A 91-amino-acid chain; its full sequence is MSIRIEIGDKWVITSDQYQFILNEKKVVKTGNKAGEEWLDTIGYYPKINQLISGLVHHHIHTAMIISLSAMAEEIEKLSFICEEAFKAVKK.

The protein to phage P2 ORF83.

This is an uncharacterized protein from Escherichia phage 186 (Bacteriophage 186).